The following is an 804-amino-acid chain: Probable protein phosphatase 2C 18 (804 aa).

The chain crosses the membrane as a helical span at residues 19 to 39 (DASGPVLFWCVLIIFAVPDAI). In terms of domain architecture, PPM-type phosphatase spans 129–434 (KYIVSSMQGL…ENTTVILVQF (306 aa)). Residues Asp165, Gly166, Gln384, and Glu425 each contribute to the Mn(2+) site. 4 disordered regions span residues 460 to 509 (STSA…GGSA), 564 to 599 (DEVELDPNFRPKPQVRRAHDGPSPTPSEIEADLNAS), 623 to 653 (PLQGHDVSSTSTNPNTATDTGSGSRTGDDDV), and 675 to 804 (VDST…EGSP). Low complexity predominate over residues 468 to 499 (GSDSDTSATSDEGVDDTATAGTTTTGYEAGSS). Over residues 628–637 (DVSSTSTNPN) the composition is skewed to polar residues. Low complexity predominate over residues 638–647 (TATDTGSGSR). Residues 713–734 (LVNNDTTVADNNASGVADSTTV) are compositionally biased toward polar residues. Low complexity predominate over residues 776-789 (DATATATASASAAV). Over residues 790–804 (ADDEGTAPDDSEGSP) the composition is skewed to acidic residues.

Belongs to the PP2C family. Mg(2+) is required as a cofactor. Requires Mn(2+) as cofactor.

It is found in the membrane. It catalyses the reaction O-phospho-L-seryl-[protein] + H2O = L-seryl-[protein] + phosphate. The catalysed reaction is O-phospho-L-threonyl-[protein] + H2O = L-threonyl-[protein] + phosphate. The chain is Probable protein phosphatase 2C 18 from Oryza sativa subsp. japonica (Rice).